The sequence spans 234 residues: Segregation and condensation protein A (234 aa).

The protein belongs to the ScpA family. Component of a cohesin-like complex composed of ScpA, ScpB and the Smc homodimer, in which ScpA and ScpB bind to the head domain of Smc. The presence of the three proteins is required for the association of the complex with DNA.

It is found in the cytoplasm. Participates in chromosomal partition during cell division. May act via the formation of a condensin-like complex containing Smc and ScpB that pull DNA away from mid-cell into both cell halves. In Streptococcus pyogenes serotype M6 (strain ATCC BAA-946 / MGAS10394), this protein is Segregation and condensation protein A.